The chain runs to 391 residues: Chorismate synthase (391 aa).

Residue R48 participates in NADP(+) binding. FMN is bound by residues 126–128 (RAS), G286, 301–305 (KPTSS), and R328.

This sequence belongs to the chorismate synthase family. Requires FMNH2 as cofactor.

The enzyme catalyses 5-O-(1-carboxyvinyl)-3-phosphoshikimate = chorismate + phosphate. The protein operates within metabolic intermediate biosynthesis; chorismate biosynthesis; chorismate from D-erythrose 4-phosphate and phosphoenolpyruvate: step 7/7. In terms of biological role, catalyzes the anti-1,4-elimination of the C-3 phosphate and the C-6 proR hydrogen from 5-enolpyruvylshikimate-3-phosphate (EPSP) to yield chorismate, which is the branch point compound that serves as the starting substrate for the three terminal pathways of aromatic amino acid biosynthesis. This reaction introduces a second double bond into the aromatic ring system. This Saccharolobus islandicus (strain L.S.2.15 / Lassen #1) (Sulfolobus islandicus) protein is Chorismate synthase.